Reading from the N-terminus, the 105-residue chain is ATP-dependent Clp protease adapter protein ClpS (105 aa).

Belongs to the ClpS family. As to quaternary structure, binds to the N-terminal domain of the chaperone ClpA.

In terms of biological role, involved in the modulation of the specificity of the ClpAP-mediated ATP-dependent protein degradation. The polypeptide is ATP-dependent Clp protease adapter protein ClpS (Prochlorococcus marinus (strain MIT 9515)).